Here is a 422-residue protein sequence, read N- to C-terminus: Monoacylglycerol lipase ABHD2 (422 aa).

Residues Met-1–Glu-15 are Cytoplasmic-facing. Residues Met-16–Val-36 traverse the membrane as a helical; Signal-anchor for type II membrane protein segment. Residues Arg-37 to Glu-422 are Extracellular-facing. One can recognise an AB hydrolase-1 domain in the interval Met-134 to Gly-385. Asn-142 carries an N-linked (GlcNAc...) asparagine glycan. Residue Ser-213 is the Nucleophile of the active site. Asn-285, Asn-335, and Asn-344 each carry an N-linked (GlcNAc...) asparagine glycan. Residues Asp-348 and His-379 each act as charge relay system in the active site.

The protein belongs to the AB hydrolase superfamily. AB hydrolase 4 family.

It is found in the cell membrane. The enzyme catalyses Hydrolyzes glycerol monoesters of long-chain fatty acids.. The catalysed reaction is an acetyl ester + H2O = an aliphatic alcohol + acetate + H(+). It carries out the reaction a triacylglycerol + H2O = a diacylglycerol + a fatty acid + H(+). It catalyses the reaction 2-(5Z,8Z,11Z,14Z-eicosatetraenoyl)-glycerol + H2O = glycerol + (5Z,8Z,11Z,14Z)-eicosatetraenoate + H(+). The enzyme catalyses a butanoate ester + H2O = an aliphatic alcohol + butanoate + H(+). The catalysed reaction is hexadecanoate ester + H2O = an aliphatic alcohol + hexadecanoate + H(+). With respect to regulation, acylglycerol lipase activity is activated upon binding to progesterone. Functionally, progesterone-dependent acylglycerol lipase that catalyzes hydrolysis of endocannabinoid arachidonoylglycerol (AG) from cell membrane. Acts as a progesterone receptor: progesterone-binding activates the acylglycerol lipase activity, mediating degradation of 1-arachidonoylglycerol (1AG) and 2-arachidonoylglycerol (2AG) to glycerol and arachidonic acid (AA). Also displays an ester hydrolase activity against acetyl ester, butanoate ester and hexadecanoate ester. Plays a key role in sperm capacitation in response to progesterone by mediating degradation of 2AG, an inhibitor of the sperm calcium channel CatSper, leading to calcium influx via CatSper and sperm activation. May also play a role in smooth muscle cells migration. This is Monoacylglycerol lipase ABHD2 (abhd2b) from Danio rerio (Zebrafish).